The following is a 358-amino-acid chain: MGSIEEVKKESAEETLGRLLRGEINDEELKKLIKYQLEKRLQWGYKSSHQEQLSFNLDFINSLKKMGMSGQVEAFTNEVYELPTECFEAAYGKSMKLSGCYFKHESSTIDEAEEASHELYCERAQIKDGQTVLDIGCGQGGLVLYVAQKYKNCHVTGLTNSKEQVNYILKQAEKLGLRNVDVILADVTQYESDKTYDRILVIGVVEHMKNMQLFIKKLSTWMAEDSLLFVDHSCHKTFNHFFEALDEDDWYSGYIFPPGCATFLSADSLLYFQDDVSVVDHWVVNGMHFARTVDAWRKKLDKNMEAVKEILLPGLGGNHEAVNGVITHIRTCCVGGYVQFSLNDGDEWMNAQLLFKKK.

S-adenosyl-L-methionine-binding residues include serine 98, glycine 136, asparagine 160, glutamine 164, aspartate 186, valine 187, and isoleucine 202. Cysteine 333 is an active-site residue.

It belongs to the CFA/CMAS family. As to quaternary structure, homodimer.

It localises to the cytoplasm. The catalysed reaction is (S)-stylopine + S-adenosyl-L-methionine = (S)-cis-N-methylstylopine + S-adenosyl-L-homocysteine. The enzyme catalyses (S)-tetrahydropalmatine + S-adenosyl-L-methionine = (S)-cis-N-methyltetrahydropalmatine + S-adenosyl-L-homocysteine. Its pathway is alkaloid biosynthesis. Functionally, N-methyltransferase with a strict substrate specificity for (R,S)-tetrahydropalmatine or (R,S)-stylopine. The protein is Probable (S)-tetrahydroprotoberberine N-methyltransferase 2 of Papaver bracteatum (Great scarlet poppy).